A 318-amino-acid chain; its full sequence is 1-phosphofructokinase (318 aa).

Residues 228–233 (SMGTEG) and 259–260 (GD) each bind ATP. Asp260 (proton acceptor) is an active-site residue.

The protein belongs to the carbohydrate kinase PfkB family.

It catalyses the reaction beta-D-fructose 1-phosphate + ATP = beta-D-fructose 1,6-bisphosphate + ADP + H(+). Its function is as follows. Catalyzes the ATP-dependent phosphorylation of fructose-l-phosphate to fructose-l,6-bisphosphate. The sequence is that of 1-phosphofructokinase from Xanthomonas campestris pv. campestris (strain ATCC 33913 / DSM 3586 / NCPPB 528 / LMG 568 / P 25).